The following is a 353-amino-acid chain: MTIAIGKSSEEPKGIFDTMDDWLRRDRFVFVGWSGLLLFPCAYFSLGGWLTGTTFVTSWYTHGLASSYLEGCNFLTAAVSTPANSMAHSLLLLWGPEAQGDFTRWCQLGGLWTFIALHGAFALIGFMLRQFELARSVQLRPYNAIAFSGPISVFVSVFLIYPLGQSGWFFAPSFGVAAIFRFILFFQGFHNWTLNPFHMMGVAGVLGAALLCAIHGATVENTLFEDGDGANTFRAFNPTQSEETYSMVTANRFWSQIFGIAFSNKRWLHFFMLFVPVTGLWMSAIGVVGLALNLRAYDFVSQEIRASEDPEFETFYTKNILLNEGIRAWMAAQDQPHENLVFPEEVLPRGNAL.

T2 carries the post-translational modification N-acetylthreonine. At T2 the chain carries Phosphothreonine. The helical transmembrane segment at 41 to 61 (CAYFSLGGWLTGTTFVTSWYT) threads the bilayer. Residue H118 participates in chlorophyll a binding. Residues 125–141 (GFMLRQFELARSVQLRP) traverse the membrane as a helical segment. Positions 130 and 143 each coordinate pheophytin a. Residues 153-166 (VFVSVFLIYPLGQS) traverse the membrane as a helical segment. H198 contacts chlorophyll a. A helical transmembrane segment spans residues 208 to 228 (AALLCAIHGATVENTLFEDGD). A plastoquinone contacts are provided by H215 and F262. H215 lines the Fe cation pocket. Position 269 (H269) interacts with Fe cation. A helical membrane pass occupies residues 279-295 (GLWMSAIGVVGLALNLR).

Belongs to the reaction center PufL/M/PsbA/D family. As to quaternary structure, PSII is composed of 1 copy each of membrane proteins PsbA, PsbB, PsbC, PsbD, PsbE, PsbF, PsbH, PsbI, PsbJ, PsbK, PsbL, PsbM, PsbT, PsbX, PsbY, PsbZ, Psb30/Ycf12, at least 3 peripheral proteins of the oxygen-evolving complex and a large number of cofactors. It forms dimeric complexes. It depends on The D1/D2 heterodimer binds P680, chlorophylls that are the primary electron donor of PSII, and subsequent electron acceptors. It shares a non-heme iron and each subunit binds pheophytin, quinone, additional chlorophylls, carotenoids and lipids. There is also a Cl(-1) ion associated with D1 and D2, which is required for oxygen evolution. The PSII complex binds additional chlorophylls, carotenoids and specific lipids. as a cofactor.

It is found in the plastid. It localises to the chloroplast thylakoid membrane. The catalysed reaction is 2 a plastoquinone + 4 hnu + 2 H2O = 2 a plastoquinol + O2. Its function is as follows. Photosystem II (PSII) is a light-driven water:plastoquinone oxidoreductase that uses light energy to abstract electrons from H(2)O, generating O(2) and a proton gradient subsequently used for ATP formation. It consists of a core antenna complex that captures photons, and an electron transfer chain that converts photonic excitation into a charge separation. The D1/D2 (PsbA/PsbD) reaction center heterodimer binds P680, the primary electron donor of PSII as well as several subsequent electron acceptors. D2 is needed for assembly of a stable PSII complex. The chain is Photosystem II D2 protein from Chara vulgaris (Common stonewort).